The chain runs to 1433 residues: MSMLKPSGLKAPSKTIKHGSTLLKAPASVATAPAEKAPSSEKSSSTTTADAHDDFVDDFRVGERVWVNGNKPGFIQFLGETQFAPGQWAGIVLDEPIGKNDGSVAGVRYFQCEPLRGIFTRPSKLSRKVLTEDEANGTQTAHASRATSPTSTSTASAVSASPAALLPSGIPQKTSPLAAKEHSTPSQFSNLSKTASGSVSNLSEAGSLKKGERELKIGDRVLVGGTKAGVVRFLGETDFAKGEWCGVELDEPLGKNDGAVAGTRYFQCQPRYGLFAPVHKVTKIGFPSTTPAKAKTTVRKVVATPAALKRSPSASSLSSLSSVASSVSSKPSRTGLLTETSSRYARKISGTTALQEALKEKQQHIEQLLAERDLERAEVAKATSHVGEIEQELALVRDGHDRHVLEMEAKMDQLRAMVEAADREKVELLNQLEEEKRKVEDLQFRVEEESITKGDLETQTKLEHARIKELEQSLLFEKTKADKLQRELEDTRVATVSEKSRIMELERDLALRVKEVAELRGRLESSKHIDDVDTSLSLLQEISSLQEKMAAAGKEHQREMSSLKEKFESSEEALRKEIKTLSASNERMGKENESLKTKLDHANKENSDVIELWKSKLESAIASHQQAMEELKVSFNKGVGAQTAEFAELKTQMEKVKLDYENEMSNLKLKQENEKSQHLKEIEALKAKLLEVTEEKEQTLENLKAKLESVEDQHLVEMEDTLNKLQEAEIKVKELDVLQAKCNEQTKLIGSLTQQIRASEEKLLDLAALQKANSEGKLEIQKLSEQLQAAEKQIQNLETEKVSNLTKELQGKEQKLLDLEKNLSAVNQVKDSLEKELQLLKEKFTSAVDGAENAQRAMQETINKLNQKEEQFALMSSELEQLKSNLTVMETKLKEREEREQQLTEAKVKLENDIAEIMKSSGDSSAQLMKMNDELRLKERQLEQIQLELTKANEKAVQLQKNVEQTAQKAEQSQQETLKTHQEELKKMQDQLTDMKKQMETSQNQYKDLQAKYEKETSEMITKHDADIKGFKQNLLDAEEALKAAQKKNDELETQAEELKKQAEQAKADKRAEEVLQTMEKVTKEKDAIHQEKIETLASLENSRQTNEKLQNELDMLKQNNLKNEEELTKSKELLNLENKKVEELKKEFEALKLAAAQKSQQLAALQEENVKLAEELGRSRDEVTSHQKLEEERSVLNNQLLEMKKRESTLKKEIDEERASLQKSISDTSALITQKDEELEKLRNEITVLRGENASAKTLQSVVKTLESDKLKLEEKVKNLEQKLKAKSEQPLTVTSPSGDIAANLLQDESAEDKQQEIDFLNSVIVDLQRRNEELNLKIQRMCEAALNGNEEETINYDSEEEGLSKKTPRLFCDICGCFDLHDTEDCPTQAQMLEEPPHSTYHGSRREERPYCDTCEMFGHWTADCNDDETF.

The disordered stretch occupies residues 1–51 (MSMLKPSGLKAPSKTIKHGSTLLKAPASVATAPAEKAPSSEKSSSTTTADA). Residues 32-49 (APAEKAPSSEKSSSTTTA) are compositionally biased toward low complexity. The region spanning 79–121 (GETQFAPGQWAGIVLDEPIGKNDGSVAGVRYFQCEPLRGIFTR) is the CAP-Gly 1 domain. The segment at 133-208 (DEANGTQTAH…VSNLSEAGSL (76 aa)) is disordered. Low complexity predominate over residues 140–168 (TAHASRATSPTSTSTASAVSASPAALLPS). A compositionally biased stretch (polar residues) spans 184–204 (TPSQFSNLSKTASGSVSNLSE). The region spanning 235 to 277 (GETDFAKGEWCGVELDEPLGKNDGAVAGTRYFQCQPRYGLFAP) is the CAP-Gly 2 domain. Residues 319 to 333 (SLSSVASSVSSKPSR) show a composition bias toward low complexity. Positions 319–338 (SLSSVASSVSSKPSRTGLLT) are disordered. Residues 351 to 1353 (TTALQEALKE…CEAALNGNEE (1003 aa)) adopt a coiled-coil conformation. The CCHC-type zinc-finger motif lies at 1412–1429 (PYCDTCEMFGHWTADCND).

It localises to the cytoplasm. Its subcellular location is the cytoskeleton. The protein resides in the cytoplasmic vesicle membrane. It is found in the cell projection. The protein localises to the ruffle. In terms of biological role, binds to the plus end of microtubules and regulates the dynamics of the microtubule cytoskeleton. Promotes microtubule growth and microtubule bundling. Links cytoplasmic vesicles to microtubules and thereby plays an important role in intracellular vesicle trafficking. Plays a role macropinocytosis and endosome trafficking. This chain is CAP-Gly domain-containing linker protein 1 (CLIP1), found in Gallus gallus (Chicken).